Consider the following 529-residue polypeptide: MAPTALLSVSDKRGVVPLAEALHRLHGYQLLSSGGTAKVLQEAGLPVTRVADHTGAPEILGGRVKTLHPRIHGGILARRGDPAHEADLLEQQIDPIDVVVVNLYPFRETVATPDVSWDAAIENIDIGGPTMVRSAAKNHAHVAVLTSPEQYDRFLKALSGSAGGVNANVRRQLALEAFAHTAAYDVAISRWMQSRPELQPDVEAAAPAEALPWLEALPLRQTLRYGENPHQKAAWFSSPMGWGGAKQLQGKALSTNNLLDLEAALATVREFGYGSSGLHPAQQAAAVVVKHTNPCGVAVGDGVGIALTRALDGDRISAFGGIVALNAVVDGPAAKELTSLFLECVVAPGYSSEALEILAAKGNLRLLELPPEAIDAAPKDHVRSILGGVLVQDLDDQPIDPSAWTVASQRQPTTAETADLRFAWQLVRHVRSNAILVARDGQSLGVGAGQMNRVGSARIALEAAGEQAVGAVLASDGFFPFDDTVRLAASHGIKAVIHPGGSLRDADSIKACDELGLAMVLTGRRHFLH.

The MGS-like domain occupies 1–146 (MAPTALLSVS…KNHAHVAVLT (146 aa)).

This sequence belongs to the PurH family.

It carries out the reaction (6R)-10-formyltetrahydrofolate + 5-amino-1-(5-phospho-beta-D-ribosyl)imidazole-4-carboxamide = 5-formamido-1-(5-phospho-D-ribosyl)imidazole-4-carboxamide + (6S)-5,6,7,8-tetrahydrofolate. The enzyme catalyses IMP + H2O = 5-formamido-1-(5-phospho-D-ribosyl)imidazole-4-carboxamide. It participates in purine metabolism; IMP biosynthesis via de novo pathway; 5-formamido-1-(5-phospho-D-ribosyl)imidazole-4-carboxamide from 5-amino-1-(5-phospho-D-ribosyl)imidazole-4-carboxamide (10-formyl THF route): step 1/1. The protein operates within purine metabolism; IMP biosynthesis via de novo pathway; IMP from 5-formamido-1-(5-phospho-D-ribosyl)imidazole-4-carboxamide: step 1/1. This is Bifunctional purine biosynthesis protein PurH from Synechococcus sp. (strain CC9311).